We begin with the raw amino-acid sequence, 492 residues long: Ribose import ATP-binding protein RbsA (492 aa).

2 consecutive ABC transporter domains span residues 3–239 and 238–492; these read IDMR…VGRK and RKLE…TGGK. Residue 35-42 participates in ATP binding; that stretch reads GENGAGKS.

Belongs to the ABC transporter superfamily. Ribose importer (TC 3.A.1.2.1) family. In terms of assembly, the complex is composed of an ATP-binding protein (RbsA), two transmembrane proteins (RbsC) and a solute-binding protein (RbsB).

It localises to the cell membrane. The catalysed reaction is D-ribose(out) + ATP + H2O = D-ribose(in) + ADP + phosphate + H(+). In terms of biological role, part of the ABC transporter complex RbsABC involved in ribose import. Responsible for energy coupling to the transport system. In Streptococcus agalactiae serotype III (strain NEM316), this protein is Ribose import ATP-binding protein RbsA.